Here is a 221-residue protein sequence, read N- to C-terminus: Putative 3-methyladenine DNA glycosylase (221 aa).

The protein belongs to the DNA glycosylase MPG family.

The sequence is that of Putative 3-methyladenine DNA glycosylase from Herpetosiphon aurantiacus (strain ATCC 23779 / DSM 785 / 114-95).